The chain runs to 197 residues: Pyridoxal 5'-phosphate synthase subunit PdxT (197 aa).

53–55 (GES) contributes to the L-glutamine binding site. Cys-85 functions as the Nucleophile in the catalytic mechanism. L-glutamine is bound by residues Arg-114 and 142 to 143 (IR). Residues His-179 and Glu-181 each act as charge relay system in the active site.

It belongs to the glutaminase PdxT/SNO family. As to quaternary structure, in the presence of PdxS, forms a dodecamer of heterodimers. Only shows activity in the heterodimer.

It catalyses the reaction aldehydo-D-ribose 5-phosphate + D-glyceraldehyde 3-phosphate + L-glutamine = pyridoxal 5'-phosphate + L-glutamate + phosphate + 3 H2O + H(+). The enzyme catalyses L-glutamine + H2O = L-glutamate + NH4(+). Its pathway is cofactor biosynthesis; pyridoxal 5'-phosphate biosynthesis. In terms of biological role, catalyzes the hydrolysis of glutamine to glutamate and ammonia as part of the biosynthesis of pyridoxal 5'-phosphate. The resulting ammonia molecule is channeled to the active site of PdxS. This chain is Pyridoxal 5'-phosphate synthase subunit PdxT, found in Pyrococcus furiosus (strain ATCC 43587 / DSM 3638 / JCM 8422 / Vc1).